Consider the following 155-residue polypeptide: Ribosome maturation factor RimP (155 aa).

Belongs to the RimP family.

It localises to the cytoplasm. Functionally, required for maturation of 30S ribosomal subunits. In Gloeothece citriformis (strain PCC 7424) (Cyanothece sp. (strain PCC 7424)), this protein is Ribosome maturation factor RimP.